Here is a 148-residue protein sequence, read N- to C-terminus: Gag-Pol polyprotein (148 aa).

The Integrase catalytic domain occupies 1-64 (IPYNPQSQGV…SAGERIIDII (64 aa)). E12 serves as a coordination point for Mg(2+). Residues 83–130 (FRVYYRDSRDPIWKGPAKLLWKGEGAVVIQDNSDIKVVPRRKVKIIRD) constitute a DNA-binding region (integrase-type).

As to quaternary structure, homotetramer; may further associate as a homohexadecamer. Part of the pre-integration complex (PIC) which is composed of viral genome, matrix protein, Vpr and integrase. Interacts with human SMARCB1/INI1 and human PSIP1/LEDGF isoform 1. Interacts with human KPNA3; this interaction might play a role in nuclear import of the pre-integration complex. Interacts with human NUP153; this interaction might play a role in nuclear import of the pre-integration complex. In terms of processing, specific enzymatic cleavages by the viral protease yield mature proteins.

Catalyzes viral DNA integration into the host chromosome, by performing a series of DNA cutting and joining reactions. This enzyme activity takes place after virion entry into a cell and reverse transcription of the RNA genome in dsDNA. The first step in the integration process is 3' processing. This step requires a complex comprising the viral genome, matrix protein, Vpr and integrase. This complex is called the pre-integration complex (PIC). The integrase protein removes 2 nucleotides from each 3' end of the viral DNA, leaving recessed CA OH's at the 3' ends. In the second step, the PIC enters cell nucleus. This process is mediated through integrase and Vpr proteins, and allows the virus to infect a non dividing cell. This ability to enter the nucleus is specific of lentiviruses, other retroviruses cannot and rely on cell division to access cell chromosomes. In the third step, termed strand transfer, the integrase protein joins the previously processed 3' ends to the 5' ends of strands of target cellular DNA at the site of integration. The 5'-ends are produced by integrase-catalyzed staggered cuts, 5 bp apart. A Y-shaped, gapped, recombination intermediate results, with the 5'-ends of the viral DNA strands and the 3' ends of target DNA strands remaining unjoined, flanking a gap of 5 bp. The last step is viral DNA integration into host chromosome. This involves host DNA repair synthesis in which the 5 bp gaps between the unjoined strands are filled in and then ligated. Since this process occurs at both cuts flanking the HIV genome, a 5 bp duplication of host DNA is produced at the ends of HIV-1 integration. Alternatively, Integrase may catalyze the excision of viral DNA just after strand transfer, this is termed disintegration. The chain is Gag-Pol polyprotein (gag-pol) from Homo sapiens (Human).